The primary structure comprises 549 residues: Glucose-6-phosphate isomerase (549 aa).

Residue E355 is the Proton donor of the active site. Active-site residues include H386 and K514.

The protein belongs to the GPI family.

It is found in the cytoplasm. The catalysed reaction is alpha-D-glucose 6-phosphate = beta-D-fructose 6-phosphate. Its pathway is carbohydrate biosynthesis; gluconeogenesis. It participates in carbohydrate degradation; glycolysis; D-glyceraldehyde 3-phosphate and glycerone phosphate from D-glucose: step 2/4. Its function is as follows. Catalyzes the reversible isomerization of glucose-6-phosphate to fructose-6-phosphate. The polypeptide is Glucose-6-phosphate isomerase (Buchnera aphidicola subsp. Acyrthosiphon pisum (strain APS) (Acyrthosiphon pisum symbiotic bacterium)).